A 72-amino-acid polypeptide reads, in one-letter code: Putative transmembrane protein DDB_G0272126 (72 aa).

Transmembrane regions (helical) follow at residues 6–26 and 38–58; these read KIIK…NTII and IILV…IFYG.

Its subcellular location is the membrane. This chain is Putative transmembrane protein DDB_G0272126, found in Dictyostelium discoideum (Social amoeba).